Consider the following 171-residue polypeptide: RxLR effector protein CRE7 (171 aa).

The first 23 residues, 1-23 (MRAIAILLAVVATIFASLHGVSA), serve as a signal peptide directing secretion. The RxLR-dEER motif lies at 46-59 (RRLRQTGDASDEER).

The protein belongs to the RxLR effector family.

It is found in the secreted. It localises to the host cell. Effector that is involved in host plant infection. Contributes to virulence during the early infection stage, by inhibiting plant defense responses induced by both PAMP-triggered immunity (PTI) and effector-triggered immunity (ETI). This chain is RxLR effector protein CRE7, found in Phytophthora infestans (strain T30-4) (Potato late blight agent).